A 446-amino-acid chain; its full sequence is Glutamine synthetase (446 aa).

Positions 15-102 (RDIRFVRLWF…MFCDITMPDG (88 aa)) constitute a GS beta-grasp domain. Residues 109-446 (PRHVLRRQLT…PYELRTYLSL (338 aa)) form the GS catalytic domain. Positions 132 and 134 each coordinate Mg(2+). Residue glutamate 184 coordinates ATP. The Mg(2+) site is built by glutamate 189 and glutamate 196. An L-glutamate-binding site is contributed by glycine 241. Histidine 245 is a Mg(2+) binding site. Residues 247–249 (HMS) and serine 249 each bind ATP. L-glutamate contacts are provided by arginine 298, glutamate 304, and arginine 316. Positions 316 and 321 each coordinate ATP. Residue glutamate 336 coordinates Mg(2+). Position 338 (arginine 338) interacts with L-glutamate.

This sequence belongs to the glutamine synthetase family. In terms of assembly, oligomer of 12 subunits arranged in the form of two hexagons. In its feedback-inhibited form, interacts with TnrA in order to block its DNA-binding activity. It depends on Mg(2+) as a cofactor.

The protein localises to the cytoplasm. It carries out the reaction L-glutamate + NH4(+) + ATP = L-glutamine + ADP + phosphate + H(+). With respect to regulation, inhibited by glutamine. Functionally, glutamine synthetase (GS) is an unusual multitasking protein that functions as an enzyme, a transcription coregulator, and a chaperone in ammonium assimilation and in the regulation of genes involved in nitrogen metabolism. It catalyzes the ATP-dependent biosynthesis of glutamine from glutamate and ammonia. Feedback-inhibited GlnA also interacts with and regulates the activity of the transcriptional regulator TnrA. During nitrogen limitation, TnrA is in its DNA-binding active state and turns on the transcription of genes required for nitrogen assimilation. Under conditions of nitrogen excess, feedback-inhibited GlnA forms a stable complex with TnrA, which inhibits its DNA-binding activity. In contrast, feedback-inhibited GlnA acts as a chaperone to stabilize the DNA-binding activity of GlnR, which represses the transcription of nitrogen assimilation genes. The polypeptide is Glutamine synthetase (Mycobacterium bovis (strain ATCC BAA-935 / AF2122/97)).